We begin with the raw amino-acid sequence, 181 residues long: Peptide deformylase 1 (181 aa).

Fe cation contacts are provided by Cys106 and His148. The active site involves Glu149. His152 provides a ligand contact to Fe cation.

Belongs to the polypeptide deformylase family. The cofactor is Fe(2+).

The catalysed reaction is N-terminal N-formyl-L-methionyl-[peptide] + H2O = N-terminal L-methionyl-[peptide] + formate. In terms of biological role, removes the formyl group from the N-terminal Met of newly synthesized proteins. Requires at least a dipeptide for an efficient rate of reaction. N-terminal L-methionine is a prerequisite for activity but the enzyme has broad specificity at other positions. This is Peptide deformylase 1 from Burkholderia multivorans (strain ATCC 17616 / 249).